Consider the following 138-residue polypeptide: Holo-[acyl-carrier-protein] synthase (138 aa).

Mg(2+) contacts are provided by D8 and E54.

Belongs to the P-Pant transferase superfamily. AcpS family. Mg(2+) is required as a cofactor.

It localises to the cytoplasm. It catalyses the reaction apo-[ACP] + CoA = holo-[ACP] + adenosine 3',5'-bisphosphate + H(+). Transfers the 4'-phosphopantetheine moiety from coenzyme A to a Ser of acyl-carrier-protein. The polypeptide is Holo-[acyl-carrier-protein] synthase (Roseiflexus sp. (strain RS-1)).